We begin with the raw amino-acid sequence, 328 residues long: Biotin synthase (328 aa).

A Radical SAM core domain is found at 51 to 282 (FNGNHVDLCS…DKIIRYAGGR (232 aa)). 3 residues coordinate [4Fe-4S] cluster: Cys69, Cys73, and Cys76. The [2Fe-2S] cluster site is built by Cys112, Cys147, Cys207, and Arg277.

It belongs to the radical SAM superfamily. Biotin synthase family. As to quaternary structure, homodimer. Requires [4Fe-4S] cluster as cofactor. It depends on [2Fe-2S] cluster as a cofactor.

The enzyme catalyses (4R,5S)-dethiobiotin + (sulfur carrier)-SH + 2 reduced [2Fe-2S]-[ferredoxin] + 2 S-adenosyl-L-methionine = (sulfur carrier)-H + biotin + 2 5'-deoxyadenosine + 2 L-methionine + 2 oxidized [2Fe-2S]-[ferredoxin]. The protein operates within cofactor biosynthesis; biotin biosynthesis; biotin from 7,8-diaminononanoate: step 2/2. Catalyzes the conversion of dethiobiotin (DTB) to biotin by the insertion of a sulfur atom into dethiobiotin via a radical-based mechanism. In Clostridium acetobutylicum (strain ATCC 824 / DSM 792 / JCM 1419 / IAM 19013 / LMG 5710 / NBRC 13948 / NRRL B-527 / VKM B-1787 / 2291 / W), this protein is Biotin synthase.